The sequence spans 536 residues: Casein kinase I homolog RAG8 (536 aa).

Residues 26 to 42 (HSTQVLHGSGQHGMQPS) are compositionally biased toward polar residues. A disordered region spans residues 26–68 (HSTQVLHGSGQHGMQPSGNNVLNGLANGATGLQSSASSTSTRD). Over residues 43–65 (GNNVLNGLANGATGLQSSASSTS) the composition is skewed to low complexity. Positions 77 to 361 (YKIGKKIGEG…QKLDGEYDWM (285 aa)) constitute a Protein kinase domain. ATP is bound by residues 83–91 (IGEGSFGVL) and lysine 106. Aspartate 196 (proton acceptor) is an active-site residue. Polar residues-rich tracts occupy residues 407–420 (NNLNGSNVPLQSHS) and 427–436 (DLTQGVSNAP). The segment at 407–524 (NNLNGSNVPL…NGKVQVADSN (118 aa)) is disordered. Low complexity-rich tracts occupy residues 437-453 (QQPQQIMSQQQYQQHTQ) and 463-514 (AYKQ…NQPQ). S-palmitoyl cysteine attachment occurs at residues cysteine 535 and cysteine 536.

This sequence belongs to the protein kinase superfamily. CK1 Ser/Thr protein kinase family. Casein kinase I subfamily.

The enzyme catalyses L-seryl-[protein] + ATP = O-phospho-L-seryl-[protein] + ADP + H(+). The catalysed reaction is L-threonyl-[protein] + ATP = O-phospho-L-threonyl-[protein] + ADP + H(+). Functionally, casein kinases are operationally defined by their preferential utilization of acidic proteins such as caseins as substrates. In Kluyveromyces lactis (strain ATCC 8585 / CBS 2359 / DSM 70799 / NBRC 1267 / NRRL Y-1140 / WM37) (Yeast), this protein is Casein kinase I homolog RAG8 (RAG8).